Consider the following 300-residue polypeptide: N-acetylmuramic acid 6-phosphate etherase (300 aa).

The region spanning 57–220 is the SIS domain; sequence IAVAFQSGGR…TTGAMIRTGK (164 aa). The active-site Proton donor is the E85. Residue E116 is part of the active site.

This sequence belongs to the GCKR-like family. MurNAc-6-P etherase subfamily. In terms of assembly, homodimer.

The catalysed reaction is N-acetyl-D-muramate 6-phosphate + H2O = N-acetyl-D-glucosamine 6-phosphate + (R)-lactate. It participates in amino-sugar metabolism; 1,6-anhydro-N-acetylmuramate degradation. It functions in the pathway amino-sugar metabolism; N-acetylmuramate degradation. Its pathway is cell wall biogenesis; peptidoglycan recycling. Functionally, specifically catalyzes the cleavage of the D-lactyl ether substituent of MurNAc 6-phosphate, producing GlcNAc 6-phosphate and D-lactate. Together with AnmK, is also required for the utilization of anhydro-N-acetylmuramic acid (anhMurNAc) either imported from the medium or derived from its own cell wall murein, and thus plays a role in cell wall recycling. This Aliivibrio fischeri (strain MJ11) (Vibrio fischeri) protein is N-acetylmuramic acid 6-phosphate etherase.